Reading from the N-terminus, the 472-residue chain is Carboxypeptidase E (472 aa).

A signal peptide spans 1–21 (MLHAMRPVLLVAALLAVTAHA). Residues 39–359 (HYHNQAQLEA…KSIFEYVWKS (321 aa)) form the Peptidase M14 domain. Zn(2+) is bound by residues His-101 and Glu-104. An N-linked (GlcNAc...) asparagine glycan is attached at Asn-134. Residue His-232 coordinates Zn(2+). Catalysis depends on Glu-329, which acts as the Proton donor/acceptor. Residues Asn-385 and Asn-428 are each glycosylated (N-linked (GlcNAc...) asparagine).

The protein belongs to the peptidase M14 family. It depends on Zn(2+) as a cofactor. As to expression, expression is restricted to the nervous system.

The protein localises to the cell projection. The protein resides in the axon. Its subcellular location is the perikaryon. It is found in the cytoplasmic vesicle. It localises to the secretory vesicle lumen. The catalysed reaction is Release of C-terminal arginine or lysine residues from polypeptides.. Its function is as follows. During FMRFamide-like peptide (FaRPs or FLP) and neuropeptide-like protein (NLP) precursor processing, catalyzes the removal of Arg or Lys residues from the C-terminus following the initial endoprotease cleavage. By processing neuropeptides, modulates basal acetylcholine release at the ventral cord neuromuscular junctions. Involved in egg-laying, defecation and locomotion. By processing FLP neuropeptides, regulates the turning step of male mating behavior. Involved in reducing pharyngeal pumping in response to high CO(2) levels. The chain is Carboxypeptidase E from Caenorhabditis elegans.